Reading from the N-terminus, the 394-residue chain is Dual-specificity RNA methyltransferase RlmN (394 aa).

Glu-115 (proton acceptor) is an active-site residue. The Radical SAM core domain occupies 121–360 (EADRATLCVS…VIVRKTRGDD (240 aa)). The cysteines at positions 128 and 365 are disulfide-linked. The [4Fe-4S] cluster site is built by Cys-135, Cys-139, and Cys-142. S-adenosyl-L-methionine contacts are provided by residues 189–190 (GE), Ser-221, 243–245 (SLH), and Asn-322. The active-site S-methylcysteine intermediate is the Cys-365.

It belongs to the radical SAM superfamily. RlmN family. [4Fe-4S] cluster is required as a cofactor.

It is found in the cytoplasm. It catalyses the reaction adenosine(2503) in 23S rRNA + 2 reduced [2Fe-2S]-[ferredoxin] + 2 S-adenosyl-L-methionine = 2-methyladenosine(2503) in 23S rRNA + 5'-deoxyadenosine + L-methionine + 2 oxidized [2Fe-2S]-[ferredoxin] + S-adenosyl-L-homocysteine. It carries out the reaction adenosine(37) in tRNA + 2 reduced [2Fe-2S]-[ferredoxin] + 2 S-adenosyl-L-methionine = 2-methyladenosine(37) in tRNA + 5'-deoxyadenosine + L-methionine + 2 oxidized [2Fe-2S]-[ferredoxin] + S-adenosyl-L-homocysteine. In terms of biological role, specifically methylates position 2 of adenine 2503 in 23S rRNA and position 2 of adenine 37 in tRNAs. m2A2503 modification seems to play a crucial role in the proofreading step occurring at the peptidyl transferase center and thus would serve to optimize ribosomal fidelity. The polypeptide is Dual-specificity RNA methyltransferase RlmN (Pasteurella multocida (strain Pm70)).